A 416-amino-acid chain; its full sequence is Cotranscriptional regulator ARB2A (416 aa).

The first 18 residues, 1–18 (MSISLSSLILLPIWINMA), serve as a signal peptide directing secretion. The disordered stretch occupies residues 208 to 247 (KPKIHVQSSSDSSDEPAEKRERKDKVSKETKKRRDFYEKY). Basic and acidic residues predominate over residues 223 to 236 (PAEKRERKDKVSKE). Ser293 acts as the Nucleophile in catalysis. Positions 413-416 (HEEL) match the Prevents secretion from ER motif.

The protein belongs to the ARB2A family. In terms of assembly, interacts with AGO2. Found in a complex, composed of AGO2, CHD7 and ARB2A.

The protein resides in the nucleus. It is found in the cytoplasm. It localises to the endoplasmic reticulum. In terms of biological role, plays a role in the regulation of alternative splicing, by interacting with AGO2 and CHD7. Seems to be required for stabilizing protein-protein interactions at the chromatin-spliceosome interface. May have hydrolase activity. This Homo sapiens (Human) protein is Cotranscriptional regulator ARB2A.